The chain runs to 304 residues: Glutaminase (304 aa).

7 residues coordinate substrate: serine 63, asparagine 114, glutamate 158, asparagine 165, tyrosine 189, tyrosine 240, and valine 258.

Belongs to the glutaminase family. As to quaternary structure, homotetramer.

The enzyme catalyses L-glutamine + H2O = L-glutamate + NH4(+). The chain is Glutaminase from Shewanella loihica (strain ATCC BAA-1088 / PV-4).